Reading from the N-terminus, the 113-residue chain is Early nodulin-12B (113 aa).

Positions 1–24 are cleaved as a signal peptide; it reads MASFSLSILVFFISALVLVPQGFA. The tract at residues 29 to 113 is disordered; sequence NPAYRPPQTK…HPPAEDNIHF (85 aa). Positions 32–42 are enriched in pro residues; sequence YRPPQTKPPVN. Repeat copies occupy residues 34 to 38 and 39 to 43. The interval 34 to 109 is 15 X 5 AA approximate tandem repeats of P-P-[QVHRTA]-[NHKE]-[KEDT]; the sequence is PPQTKPPVNK…PTHKHPPAED (76 aa). The 3; approximate repeat unit spans residues 44-48; it reads PSHKE. 2 stretches are compositionally biased toward basic and acidic residues: residues 45-60 and 67-113; these read SHKEPPVHKPPHKEPP and KEPP…NIHF. 3 repeat units span residues 49 to 53, 54 to 58, and 59 to 63. One copy of the 7; approximate repeat lies at 64–68; sequence PRHKE. 4 tandem repeats follow at residues 69–73, 74–78, 79–83, and 84–88. Residues 89-93 form a 12; approximate repeat; the sequence is SPVHK. 3 repeat units span residues 94 to 98, 99 to 103, and 105 to 109.

The protein belongs to the plant proline-rich protein superfamily. ENOD12 family. As to expression, expressed only in young nodules.

Its subcellular location is the secreted. The protein localises to the cell wall. Its function is as follows. Involved in the infection process during the plant-rhizobium interaction. The chain is Early nodulin-12B (ENOD12B) from Medicago sativa (Alfalfa).